The following is a 362-amino-acid chain: MGKRLLILEDGTIFEGQAFGADLDVTGEIVFNTGMTGYQESITDQSYNGQILTFTYPLVGNYGINRDDYESIKPTCKGVVVSENARRANNWRKQMTLDEFLKSKNIPGISGIDTRALTKIIRHHGTMKATLANEGDSIEHLQDQLRATVLPTNNIEQVSTKTAYPAPGVGKNIVLVDFGLKHSILREFSKRNCNVTVVPYNTTAQEILNLNPDGIMLSNGPGNPQDVPEALEMIRGVQGKIPIFGICMGHQLFSLANGASTYKMKFGHRGFNHAVREIATGRIDFTSQNHGYAVSRDNLPEELIITHEEINDKSIEGVRHRYYPAFSVQYHPDAAPGPHDASYLFDEFLELIDAFQLEKASK.

A CPSase region spans residues 1–169; that stretch reads MGKRLLILED…TKTAYPAPGV (169 aa). Residues Ser-46, Gly-220, and Gly-222 each coordinate L-glutamine. The Glutamine amidotransferase type-1 domain occupies 172 to 358; that stretch reads NIVLVDFGLK…LELIDAFQLE (187 aa). Catalysis depends on Cys-247, which acts as the Nucleophile. Positions 248, 251, 289, 291, and 292 each coordinate L-glutamine. Catalysis depends on residues His-331 and Asp-333.

Belongs to the CarA family. In terms of assembly, composed of two chains; the small (or glutamine) chain promotes the hydrolysis of glutamine to ammonia, which is used by the large (or ammonia) chain to synthesize carbamoyl phosphate. Tetramer of heterodimers (alpha,beta)4.

It carries out the reaction hydrogencarbonate + L-glutamine + 2 ATP + H2O = carbamoyl phosphate + L-glutamate + 2 ADP + phosphate + 2 H(+). The enzyme catalyses L-glutamine + H2O = L-glutamate + NH4(+). It functions in the pathway amino-acid biosynthesis; L-arginine biosynthesis; carbamoyl phosphate from bicarbonate: step 1/1. The protein operates within pyrimidine metabolism; UMP biosynthesis via de novo pathway; (S)-dihydroorotate from bicarbonate: step 1/3. Small subunit of the glutamine-dependent carbamoyl phosphate synthetase (CPSase). CPSase catalyzes the formation of carbamoyl phosphate from the ammonia moiety of glutamine, carbonate, and phosphate donated by ATP, constituting the first step of 2 biosynthetic pathways, one leading to arginine and/or urea and the other to pyrimidine nucleotides. The small subunit (glutamine amidotransferase) binds and cleaves glutamine to supply the large subunit with the substrate ammonia. This chain is Carbamoyl phosphate synthase small chain, found in Streptococcus mutans serotype c (strain ATCC 700610 / UA159).